A 131-amino-acid polypeptide reads, in one-letter code: Fumarate reductase subunit C (131 aa).

Transmembrane regions (helical) follow at residues 30–50, 57–77, and 109–129; these read EGTAVPTVWFSIELIFGLFAL, WMGFVGFLQNPVVVILNLITL, and IIKGLWVVTAVVTVVILYVAL.

Belongs to the FrdC family. Part of an enzyme complex containing four subunits: a flavoprotein (FrdA), an iron-sulfur protein (FrdB), and two hydrophobic anchor proteins (FrdC and FrdD).

The protein localises to the cell inner membrane. In terms of biological role, two distinct, membrane-bound, FAD-containing enzymes are responsible for the catalysis of fumarate and succinate interconversion; fumarate reductase is used in anaerobic growth, and succinate dehydrogenase is used in aerobic growth. Anchors the catalytic components of the fumarate reductase complex to the cell inner membrane, binds quinones. The polypeptide is Fumarate reductase subunit C (Salmonella dublin (strain CT_02021853)).